The primary structure comprises 55 residues: MTHALPKVVKSQLVQDIGVALILGSIAGCFFKYGVDKKKQRERVAFYEKYDKEDL.

A helical membrane pass occupies residues 13 to 35 (LVQDIGVALILGSIAGCFFKYGV).

Slime mold cytochrome c oxidase consists of at least seven different polypeptides species, subunits I, II, III, IV, V, VI, and VIIe/s in order of MW.

The protein localises to the mitochondrion inner membrane. It catalyses the reaction 4 Fe(II)-[cytochrome c] + O2 + 8 H(+)(in) = 4 Fe(III)-[cytochrome c] + 2 H2O + 4 H(+)(out). Its function is as follows. This protein is one of the nuclear-coded polypeptide chains of cytochrome c oxidase, the terminal oxidase in mitochondrial electron transport. This chain is Cytochrome c oxidase subunit 7s (cxgS), found in Dictyostelium discoideum (Social amoeba).